A 164-amino-acid chain; its full sequence is Small ribosomal subunit protein uS5 (164 aa).

In terms of domain architecture, S5 DRBM spans 10–73 (IEERVVAINR…ESAKKNMIEV (64 aa)).

The protein belongs to the universal ribosomal protein uS5 family. In terms of assembly, part of the 30S ribosomal subunit. Contacts proteins S4 and S8.

Its function is as follows. With S4 and S12 plays an important role in translational accuracy. In terms of biological role, located at the back of the 30S subunit body where it stabilizes the conformation of the head with respect to the body. The chain is Small ribosomal subunit protein uS5 from Streptococcus suis (strain 98HAH33).